Consider the following 246-residue polypeptide: tRNA (guanine-N(1)-)-methyltransferase (246 aa).

Residues Gly-113 and 133–138 (IGDYVL) contribute to the S-adenosyl-L-methionine site.

Belongs to the RNA methyltransferase TrmD family. In terms of assembly, homodimer.

It is found in the cytoplasm. The enzyme catalyses guanosine(37) in tRNA + S-adenosyl-L-methionine = N(1)-methylguanosine(37) in tRNA + S-adenosyl-L-homocysteine + H(+). Functionally, specifically methylates guanosine-37 in various tRNAs. The polypeptide is tRNA (guanine-N(1)-)-methyltransferase (Yersinia pseudotuberculosis serotype O:1b (strain IP 31758)).